The following is a 132-amino-acid chain: UPF0060 membrane protein SG1469 (132 aa).

Helical transmembrane passes span V5–Y25, L32–P52, and A60–I80.

It belongs to the UPF0060 family.

It is found in the cell inner membrane. The polypeptide is UPF0060 membrane protein SG1469 (Sodalis glossinidius (strain morsitans)).